An 843-amino-acid polypeptide reads, in one-letter code: Translation initiation factor IF-2 (843 aa).

Disordered regions lie at residues 55–185 and 209–228; these read AEAV…EDRD and KVEE…QVKV. Basic and acidic residues predominate over residues 62–106; sequence PQEKPKKSAPKKEEKPKEEVKKEAEEKVAASKKEEEKPQEKKSVE. Positions 114–128 are enriched in basic residues; the sequence is LKKRRGLVIVKKKRP. A compositionally biased stretch (basic and acidic residues) spans 129–141; it reads KVEPKVEEKEAKQ. Residues 156–165 are compositionally biased toward basic residues; the sequence is LKRKPKKAKK. 2 stretches are compositionally biased toward basic and acidic residues: residues 171–185 and 209–221; these read KKNE…EDRD and KVEE…EPQK. Residues 342–511 enclose the tr-type G domain; that stretch reads ERPPVITIMG…LLQAEIMELK (170 aa). Residues 351–358 are G1; the sequence is GHVDHGKT. 351–358 provides a ligand contact to GTP; sequence GHVDHGKT. Residues 376–380 are G2; it reads GITQH. The interval 397–400 is G3; the sequence is DTPG. GTP is bound by residues 397–401 and 451–454; these read DTPGH and NKID. Residues 451–454 form a G4 region; it reads NKID. The tract at residues 487 to 489 is G5; the sequence is SAK.

It belongs to the TRAFAC class translation factor GTPase superfamily. Classic translation factor GTPase family. IF-2 subfamily.

Its subcellular location is the cytoplasm. Functionally, one of the essential components for the initiation of protein synthesis. Protects formylmethionyl-tRNA from spontaneous hydrolysis and promotes its binding to the 30S ribosomal subunits. Also involved in the hydrolysis of GTP during the formation of the 70S ribosomal complex. The sequence is that of Translation initiation factor IF-2 from Nitratiruptor sp. (strain SB155-2).